The primary structure comprises 187 residues: Adenine phosphoribosyltransferase (187 aa).

This sequence belongs to the purine/pyrimidine phosphoribosyltransferase family. Homodimer.

The protein localises to the cytoplasm. The enzyme catalyses AMP + diphosphate = 5-phospho-alpha-D-ribose 1-diphosphate + adenine. The protein operates within purine metabolism; AMP biosynthesis via salvage pathway; AMP from adenine: step 1/1. Functionally, catalyzes a salvage reaction resulting in the formation of AMP, that is energically less costly than de novo synthesis. In Yersinia pestis (strain Pestoides F), this protein is Adenine phosphoribosyltransferase.